The primary structure comprises 501 residues: NAD(P)H-quinone oxidoreductase subunit 2, chloroplastic (501 aa).

The next 14 membrane-spanning stretches (helical) occupy residues 15–35 (ILPE…DLTF), 40–60 (TIWL…ILLF), 82–102 (IFQS…IEYI), 107–127 (MAIP…MFLC), 132–152 (LVTI…LCGY), 167–187 (LLIG…LYGL), 212–232 (TFIA…LVPF), 244–264 (PTPV…ALAT), 278–298 (WKIF…LVAI), 307–327 (LAYS…TGDL), 333–353 (MTIY…CIIL), 378–398 (FSLT…GFFG), 410–430 (GFYL…YYYL), and 466–486 (FVMI…NPIF).

This sequence belongs to the complex I subunit 2 family. As to quaternary structure, NDH is composed of at least 16 different subunits, 5 of which are encoded in the nucleus.

It is found in the plastid. The protein resides in the chloroplast thylakoid membrane. The catalysed reaction is a plastoquinone + NADH + (n+1) H(+)(in) = a plastoquinol + NAD(+) + n H(+)(out). It carries out the reaction a plastoquinone + NADPH + (n+1) H(+)(in) = a plastoquinol + NADP(+) + n H(+)(out). Its function is as follows. NDH shuttles electrons from NAD(P)H:plastoquinone, via FMN and iron-sulfur (Fe-S) centers, to quinones in the photosynthetic chain and possibly in a chloroplast respiratory chain. The immediate electron acceptor for the enzyme in this species is believed to be plastoquinone. Couples the redox reaction to proton translocation, and thus conserves the redox energy in a proton gradient. The polypeptide is NAD(P)H-quinone oxidoreductase subunit 2, chloroplastic (Marchantia polymorpha (Common liverwort)).